We begin with the raw amino-acid sequence, 430 residues long: Asparagine--tRNA ligase (430 aa).

The protein belongs to the class-II aminoacyl-tRNA synthetase family. Homodimer.

The protein resides in the cytoplasm. The catalysed reaction is tRNA(Asn) + L-asparagine + ATP = L-asparaginyl-tRNA(Asn) + AMP + diphosphate + H(+). The chain is Asparagine--tRNA ligase from Oceanobacillus iheyensis (strain DSM 14371 / CIP 107618 / JCM 11309 / KCTC 3954 / HTE831).